The primary structure comprises 568 residues: Autophagy-related protein 17 (568 aa).

Disordered regions lie at residues 1–59 (MASF…DSSE) and 522–568 (SYEM…ERPF). Over residues 522–546 (SYEMEAHGEPENEGKVETAYERETE) the composition is skewed to basic and acidic residues.

Belongs to the ATG17 family.

Its subcellular location is the cytoplasm. The protein resides in the preautophagosomal structure membrane. Autophagy-specific protein that functions in response to autophagy-inducing signals as a scaffold to recruit other ATG proteins to organize pre-autophagosomal structure (PAS) formation. Modulates the timing and magnitude of the autophagy response, such as the size of the sequestering vesicles. Plays particularly a role in pexophagy and nucleophagy. This chain is Autophagy-related protein 17 (apg-9), found in Neurospora crassa (strain ATCC 24698 / 74-OR23-1A / CBS 708.71 / DSM 1257 / FGSC 987).